The following is a 207-amino-acid chain: uncharacterized protein (207 aa).

An N-terminal signal peptide occupies residues 1 to 19 (MRFNVSFLLSLLLPTLAFA).

To P.multocida PM1509.

This is an uncharacterized protein from Pasteurella multocida (strain Pm70).